The chain runs to 415 residues: Proline-serine-threonine phosphatase-interacting protein 1 (415 aa).

Residues 5–264 (LQFRDAFWCR…TLEGCDVEGD (260 aa)) form the F-BAR domain. Coiled coils occupy residues 94 to 133 (LALA…KLSL) and 162 to 215 (SANG…TCEA). At serine 318 the chain carries Phosphoserine. Tyrosine 344 is subject to Phosphotyrosine; by ABL1. One can recognise an SH3 domain in the interval 358–415 (SSAQDYRALYDYTAQNSDELDISAGDILAVILEGEDGWWTVERNGQRGFVPGSYLEKL).

As to quaternary structure, homodimer. Homotrimer. Interacts (via coiled-coil domain) with CD2AP, PTPN12 and PTPN18. Interacts (via SH3 domain) with ABL1 and WAS. Interacts (via SH3 and coiled-coil domains) with MEFV (via B-box zinc finger); the interaction allows binding of MEFV to PYCARD and facilitates formation of PYCARD pyroptosomes. Interacts with DNM2 and FASLG. Interacts with CD2. Post-translationally, dephosphorylated on Tyr-344 by PTPN18, this event negatively regulates the association of PSTPIP1 with SH2 domain-containing proteins as tyrosine kinase. Phosphorylation of Tyr-344 is probably required for subsequent phosphorylation at other tyrosine residues. Phosphorylation is induced by activation of the EGFR and PDGFR in a ABL1 dependent manner. The phosphorylation regulates the interaction with WAS and with MEFV. Highly expressed in adult lung and spleen, and weakly expressed in testis, muscle, kidney, brain and heart. Highly expressed in spleen and thymus, moderately in lung, brain and muscle, and weakly expressed in heart and liver (at protein level).

Its subcellular location is the cytoplasm. It localises to the perinuclear region. The protein resides in the cell projection. The protein localises to the lamellipodium. It is found in the cleavage furrow. Its subcellular location is the cytoskeleton. It localises to the cell membrane. The protein resides in the uropodium. In terms of biological role, involved in regulation of the actin cytoskeleton. May regulate WAS actin-bundling activity. Bridges the interaction between ABL1 and PTPN18 leading to ABL1 dephosphorylation. May play a role as a scaffold protein between PTPN12 and WAS and allow PTPN12 to dephosphorylate WAS. Has the potential to physically couple CD2 and CD2AP to WAS. Acts downstream of CD2 and CD2AP to recruit WAS to the T-cell:APC contact site so as to promote the actin polymerization required for synapse induction during T-cell activation. Down-regulates CD2-stimulated adhesion through the coupling of PTPN12 to CD2. Also has a role in innate immunity and the inflammatory response. Recruited to inflammasomes by MEFV. Induces formation of pyroptosomes, large supramolecular structures composed of oligomerized PYCARD dimers which form prior to inflammatory apoptosis. Binding to MEFV allows MEFV to bind to PYCARD and facilitates pyroptosome formation. Regulates endocytosis and cell migration in neutrophils. The sequence is that of Proline-serine-threonine phosphatase-interacting protein 1 (Pstpip1) from Mus musculus (Mouse).